The sequence spans 258 residues: 14-3-3 protein 6 (258 aa).

Residues 238–258 (DMQDDGTDEIKEATPKPDDNE) are disordered. The span at 245–258 (DEIKEATPKPDDNE) shows a compositional bias: basic and acidic residues.

The protein belongs to the 14-3-3 family. Homodimer.

The protein is 14-3-3 protein 6 (TFT6) of Solanum lycopersicum (Tomato).